Reading from the N-terminus, the 275-residue chain is 6-deoxy-6-sulfo-D-fructose transketolase subunit SqwG (275 aa).

This sequence belongs to the transketolase family. As to quaternary structure, forms a complex with SqwH. It depends on thiamine diphosphate as a cofactor.

The enzyme catalyses 6-deoxy-6-sulfo-D-fructose + D-glyceraldehyde 3-phosphate = 4-deoxy-4-sulfo-D-erythrose + D-xylulose 5-phosphate. The catalysed reaction is 4-deoxy-4-sulfo-D-erythrulose + D-glyceraldehyde 3-phosphate = sulfoacetaldehyde + D-xylulose 5-phosphate. Functionally, part of the sulfo-TK pathway, a D-sulfoquinovose degradation pathway that produces 2-hydroxyethane-1-sulfonate (isethionate). Catalyzes two steps of the pathway: the formation of 4-deoxy-4-sulfoerythrose (SE) and xylulose 5-phosphate from 6-deoxy-6-sulfo-D-fructose (SF) and glyceraldehyde 3-phosphate, and the formation of sulfoacetaldehyde (SA) and xylulose 5-phosphate from 4-deoxy-4-sulfo-D-erythrulose (SEu) and glyceraldehyde 3-phosphate. The polypeptide is 6-deoxy-6-sulfo-D-fructose transketolase subunit SqwG (Clostridium sp. (strain MSTE9)).